The following is a 395-amino-acid chain: FAD-dependent urate hydroxylase (395 aa).

Residues glycine 11, 30 to 31 (ER), serine 43, and methionine 125 contribute to the FAD site. Substrate contacts are provided by residues asparagine 180, arginine 206, and 218 to 220 (YFF). FAD is bound by residues aspartate 287 and 297-301 (GQGGC).

The protein belongs to the FAD-dependent urate hydroxylase family. In terms of assembly, monomer. It depends on FAD as a cofactor.

The catalysed reaction is urate + NADH + O2 + H(+) = 5-hydroxyisourate + NAD(+) + H2O. It functions in the pathway purine metabolism; urate degradation. Functionally, catalyzes the hydroxylation of urate to 5-hydroxyisourate (HIU). Is likely to be involved in the urate degradation pathway to allantoin. Prefers NADH over NADPH as the electron donor. In Mycolicibacterium vanbaalenii (strain DSM 7251 / JCM 13017 / BCRC 16820 / KCTC 9966 / NRRL B-24157 / PYR-1) (Mycobacterium vanbaalenii), this protein is FAD-dependent urate hydroxylase.